A 522-amino-acid chain; its full sequence is ATP synthase subunit alpha, mitochondrial (522 aa).

Residue Gly-172–Thr-179 coordinates ATP.

This sequence belongs to the ATPase alpha/beta chains family. F-type ATPases have 2 components, CF(1) - the catalytic core - and CF(0) - the membrane proton channel. CF(1) has five subunits: alpha(3), beta(3), gamma(1), delta(1), epsilon(1). CF(0) has three main subunits: a, b and c.

The protein resides in the mitochondrion. Its subcellular location is the mitochondrion inner membrane. Mitochondrial membrane ATP synthase (F(1)F(0) ATP synthase or Complex V) produces ATP from ADP in the presence of a proton gradient across the membrane which is generated by electron transport complexes of the respiratory chain. F-type ATPases consist of two structural domains, F(1) - containing the extramembraneous catalytic core, and F(0) - containing the membrane proton channel, linked together by a central stalk and a peripheral stalk. During catalysis, ATP synthesis in the catalytic domain of F(1) is coupled via a rotary mechanism of the central stalk subunits to proton translocation. Subunits alpha and beta form the catalytic core in F(1). Rotation of the central stalk against the surrounding alpha(3)beta(3) subunits leads to hydrolysis of ATP in three separate catalytic sites on the beta subunits. Subunit alpha does not bear the catalytic high-affinity ATP-binding sites. The protein is ATP synthase subunit alpha, mitochondrial (ATP1) of Acanthamoeba castellanii (Amoeba).